The chain runs to 704 residues: mRNA (2'-O-methyladenosine-N(6)-)-methyltransferase (704 aa).

The segment at 1 to 33 (MANENHGSPREEASLLSHSPGTSNQSQPCSPKP) is disordered. Residues 16–29 (LSHSPGTSNQSQPC) show a composition bias toward polar residues. S30 carries the post-translational modification Phosphoserine. Residues 43-77 (ELVHAGWEKCWSRRENRPYYFNRFTNQSLWEMPVL) enclose the WW domain. The tract at residues 88 to 151 (GLNATPLPQD…PSSPSIPGTP (64 aa)) is disordered. The short motif at 109-113 (KPRKR) is the Nuclear localization signal element. The residue at position 116 (S116) is a Phosphoserine. A compositionally biased stretch (polar residues) spans 136–149 (PTGQSVPSSPSIPG). T152 carries the phosphothreonine modification. Substrate-binding residues include R235 and R265. An S-adenosyl-L-methionine-binding site is contributed by 553–556 (NPPF). Substrate-binding positions include E558 and 588-592 (WREPP). 614–616 (FEH) provides a ligand contact to S-adenosyl-L-methionine. Positions 663 to 704 (LSAAYRQSGRSHSSGSSSSSSSEAKDRDSGREQGPSREPHPT) are disordered. Residues 669–684 (QSGRSHSSGSSSSSSS) carry the Nuclear localization signal motif. Residues 670-684 (SGRSHSSGSSSSSSS) show a composition bias toward low complexity. The span at 685-704 (EAKDRDSGREQGPSREPHPT) shows a compositional bias: basic and acidic residues.

It belongs to the CAPAM family. Interacts with POLR2A; interacts with the phosphorylated C-terminal domain (CTD) of POLR2A. In terms of tissue distribution, ubiquitous.

It is found in the nucleus. It carries out the reaction a 5'-end (N(7)-methyl 5'-triphosphoguanosine)-(2'-O-methyladenosine) in mRNA + S-adenosyl-L-methionine = a 5'-end (N(7)-methyl 5'-triphosphoguanosine)-(N(6),2'-O-dimethyladenosine) in mRNA + S-adenosyl-L-homocysteine + H(+). Cap-specific adenosine methyltransferase activity is inhibited by zinc. Cap-specific adenosine methyltransferase that catalyzes formation of N(6),2'-O-dimethyladenosine cap (m6A(m)) by methylating the adenosine at the second transcribed position of capped mRNAs. Recruited to the early elongation complex of RNA polymerase II (RNAPII) via interaction with POLR2A and mediates formation of m6A(m) co-transcriptionally. This chain is mRNA (2'-O-methyladenosine-N(6)-)-methyltransferase, found in Homo sapiens (Human).